Reading from the N-terminus, the 312-residue chain is Malate dehydrogenase (312 aa).

NAD(+) contacts are provided by residues 12-17 and Asp-36; that span reads GAGFTG. Residues Arg-87 and Arg-93 each contribute to the substrate site. NAD(+)-binding positions include Asn-100 and 123–125; that span reads LTN. Residue Asn-125 coordinates substrate. Ser-149 is modified (phosphoserine). Residue Arg-156 coordinates substrate. His-180 acts as the Proton acceptor in catalysis.

It belongs to the LDH/MDH superfamily. MDH type 3 family.

The catalysed reaction is (S)-malate + NAD(+) = oxaloacetate + NADH + H(+). Its function is as follows. Catalyzes the reversible oxidation of malate to oxaloacetate. In Geobacillus thermodenitrificans (strain NG80-2), this protein is Malate dehydrogenase.